Reading from the N-terminus, the 113-residue chain is Na(+)/H(+) antiporter subunit C1 (113 aa).

The next 3 helical transmembrane spans lie at Met-1–Leu-21, Ile-28–Gly-48, and Leu-72–Phe-92.

The protein belongs to the CPA3 antiporters (TC 2.A.63) subunit C family. May form a heterooligomeric complex that consists of seven subunits: mnhA1, mnhB1, mnhC1, mnhD1, mnhE1, mnhF1 and mnhG1.

It localises to the cell membrane. Functionally, mnh complex is a Na(+)/H(+) antiporter involved in Na(+) excretion. The chain is Na(+)/H(+) antiporter subunit C1 (mnhC1) from Staphylococcus aureus (strain JH1).